The chain runs to 199 residues: Holliday junction branch migration complex subunit RuvA (199 aa).

The tract at residues 1-64 (MIGRLRGILL…DDAHLLYAFA (64 aa)) is domain I. The segment at 65 to 143 (SEKERGLFRS…DMPESGVAGM (79 aa)) is domain II. A flexible linker region spans residues 144-150 (RPDRVDG). The domain III stretch occupies residues 151–199 (SAPGTVAEAVSALVALGYKPNEASRAVRRLDTEALTTEEIIRQALQRML).

It belongs to the RuvA family. In terms of assembly, homotetramer. Forms an RuvA(8)-RuvB(12)-Holliday junction (HJ) complex. HJ DNA is sandwiched between 2 RuvA tetramers; dsDNA enters through RuvA and exits via RuvB. An RuvB hexamer assembles on each DNA strand where it exits the tetramer. Each RuvB hexamer is contacted by two RuvA subunits (via domain III) on 2 adjacent RuvB subunits; this complex drives branch migration. In the full resolvosome a probable DNA-RuvA(4)-RuvB(12)-RuvC(2) complex forms which resolves the HJ.

It localises to the cytoplasm. Functionally, the RuvA-RuvB-RuvC complex processes Holliday junction (HJ) DNA during genetic recombination and DNA repair, while the RuvA-RuvB complex plays an important role in the rescue of blocked DNA replication forks via replication fork reversal (RFR). RuvA specifically binds to HJ cruciform DNA, conferring on it an open structure. The RuvB hexamer acts as an ATP-dependent pump, pulling dsDNA into and through the RuvAB complex. HJ branch migration allows RuvC to scan DNA until it finds its consensus sequence, where it cleaves and resolves the cruciform DNA. The chain is Holliday junction branch migration complex subunit RuvA from Nitrosococcus oceani (strain ATCC 19707 / BCRC 17464 / JCM 30415 / NCIMB 11848 / C-107).